We begin with the raw amino-acid sequence, 237 residues long: Large ribosomal subunit protein uL1 (237 aa).

The protein belongs to the universal ribosomal protein uL1 family. In terms of assembly, part of the 50S ribosomal subunit.

Functionally, binds directly to 23S rRNA. The L1 stalk is quite mobile in the ribosome, and is involved in E site tRNA release. Protein L1 is also a translational repressor protein, it controls the translation of the L11 operon by binding to its mRNA. The protein is Large ribosomal subunit protein uL1 of Chloroflexus aggregans (strain MD-66 / DSM 9485).